A 152-amino-acid polypeptide reads, in one-letter code: MTSTLNTLKSNSGSRKKKLRKGRGIAAGQGASCGFGMRGQKSRSGRPTRPGFEGGQMPLYRRVPKLKHFEIINQKNFSIINLDKLKDFNDNDTVNLDSLVKKGLIFKPKFPLKILGNGKVNVKLTVQAHAFTKVAKQKIEDAGGSCELLNNK.

Residues 1–57 (MTSTLNTLKSNSGSRKKKLRKGRGIAAGQGASCGFGMRGQKSRSGRPTRPGFEGGQM) are disordered. Over residues 14-23 (SRKKKLRKGR) the composition is skewed to basic residues. Residues 25–37 (IAAGQGASCGFGM) show a composition bias toward gly residues.

This sequence belongs to the universal ribosomal protein uL15 family. As to quaternary structure, part of the 50S ribosomal subunit.

Functionally, binds to the 23S rRNA. This Prochlorococcus marinus (strain MIT 9312) protein is Large ribosomal subunit protein uL15.